We begin with the raw amino-acid sequence, 683 residues long: Methionine--tRNA ligase (683 aa).

Positions 15 to 25 match the 'HIGH' region motif; sequence PYANGPIHLGH. Zn(2+)-binding residues include C146, C149, C159, and C162. Residues 332 to 336 carry the 'KMSKS' region motif; that stretch reads KMSKS. Position 335 (K335) interacts with ATP. One can recognise a tRNA-binding domain in the interval 581 to 683; the sequence is DFCKVDLRVA…AGAKAGQRVK (103 aa).

It belongs to the class-I aminoacyl-tRNA synthetase family. MetG type 1 subfamily. Homodimer. The cofactor is Zn(2+).

The protein localises to the cytoplasm. The enzyme catalyses tRNA(Met) + L-methionine + ATP = L-methionyl-tRNA(Met) + AMP + diphosphate. Its function is as follows. Is required not only for elongation of protein synthesis but also for the initiation of all mRNA translation through initiator tRNA(fMet) aminoacylation. This chain is Methionine--tRNA ligase, found in Histophilus somni (strain 2336) (Haemophilus somnus).